The primary structure comprises 944 residues: ATP-dependent helicase fft1 (944 aa).

Disordered stretches follow at residues 89–109 and 174–246; these read AAYDPHDQPPERDVSLKESSN and SAQK…NSIP. Residues 92–108 are compositionally biased toward basic and acidic residues; it reads DPHDQPPERDVSLKESS. A compositionally biased stretch (polar residues) spans 174 to 184; that stretch reads SAQKLNNQPIE. The span at 186–203 shows a compositional bias: basic and acidic residues; that stretch reads SSVDKENAKRKRYVEEGT. The segment covering 217-227 has biased composition (acidic residues); the sequence is LSDEETNEDDL. Polar residues predominate over residues 230–246; sequence QSPTACTTDANIDNSIP. Residues 426–592 enclose the Helicase ATP-binding domain; sequence CLMYKAKLSG…ISLLAFMLPK (167 aa). Residue 439–446 coordinates ATP; sequence DEMGLGKT. Residues 543-546 carry the DEGH box motif; the sequence is DEGH. The region spanning 766-923 is the Helicase C-terminal domain; the sequence is KVKKLCSLLK…DSEKIQKEIS (158 aa).

It belongs to the SNF2/RAD54 helicase family.

The protein localises to the nucleus. The catalysed reaction is ATP + H2O = ADP + phosphate + H(+). DNA helicase that possesses intrinsic ATP-dependent nucleosome-remodeling activity and is required for heterochromatin organization. The chain is ATP-dependent helicase fft1 (fft1) from Schizosaccharomyces pombe (strain 972 / ATCC 24843) (Fission yeast).